The chain runs to 376 residues: CYP enzymes assisting alcohol dehydrogenase (376 aa).

Residues Cys-43, Thr-45, His-64, Cys-94, Cys-97, Cys-100, Cys-108, and Cys-173 each coordinate Zn(2+). NAD(+) is bound at residue Thr-45. Substrate-binding residues include Thr-45 and His-64. NAD(+) is bound by residues 199 to 204 (GLGAVG), Asp-223, Lys-228, 294 to 296 (LGA), Phe-320, and Lys-371.

This sequence belongs to the zinc-containing alcohol dehydrogenase family. Class-III subfamily. In terms of assembly, homodimer. It depends on Zn(2+) as a cofactor.

Its pathway is alkaloid biosynthesis. May be a positive catalyzer of strictosidine production by assisting secologanin biosynthesis, thus being involved in monoterpene indole alkaloids accumulation. This chain is CYP enzymes assisting alcohol dehydrogenase, found in Catharanthus roseus (Madagascar periwinkle).